The chain runs to 212 residues: ATP-dependent dethiobiotin synthetase BioD (212 aa).

12–17 (DCGKTF) is a binding site for ATP. Residue Thr-16 coordinates Mg(2+). The active site involves Lys-33. Ser-37 provides a ligand contact to substrate. ATP-binding positions include Asp-50, 110–113 (EGAG), and 170–171 (NC). Asp-50 and Glu-110 together coordinate Mg(2+).

Belongs to the dethiobiotin synthetase family. As to quaternary structure, homodimer. Mg(2+) serves as cofactor.

The protein resides in the cytoplasm. The catalysed reaction is (7R,8S)-7,8-diammoniononanoate + CO2 + ATP = (4R,5S)-dethiobiotin + ADP + phosphate + 3 H(+). Its pathway is cofactor biosynthesis; biotin biosynthesis; biotin from 7,8-diaminononanoate: step 1/2. Its function is as follows. Catalyzes a mechanistically unusual reaction, the ATP-dependent insertion of CO2 between the N7 and N8 nitrogen atoms of 7,8-diaminopelargonic acid (DAPA, also called 7,8-diammoniononanoate) to form a ureido ring. This Legionella pneumophila subsp. pneumophila (strain Philadelphia 1 / ATCC 33152 / DSM 7513) protein is ATP-dependent dethiobiotin synthetase BioD.